A 72-amino-acid chain; its full sequence is NAD(P)H-quinone oxidoreductase subunit O (72 aa).

Belongs to the complex I NdhO subunit family. NDH-1 can be composed of about 15 different subunits; different subcomplexes with different compositions have been identified which probably have different functions.

It localises to the cellular thylakoid membrane. The catalysed reaction is a plastoquinone + NADH + (n+1) H(+)(in) = a plastoquinol + NAD(+) + n H(+)(out). It carries out the reaction a plastoquinone + NADPH + (n+1) H(+)(in) = a plastoquinol + NADP(+) + n H(+)(out). Functionally, NDH-1 shuttles electrons from an unknown electron donor, via FMN and iron-sulfur (Fe-S) centers, to quinones in the respiratory and/or the photosynthetic chain. The immediate electron acceptor for the enzyme in this species is believed to be plastoquinone. Couples the redox reaction to proton translocation, and thus conserves the redox energy in a proton gradient. Cyanobacterial NDH-1 also plays a role in inorganic carbon-concentration. This Gloeothece citriformis (strain PCC 7424) (Cyanothece sp. (strain PCC 7424)) protein is NAD(P)H-quinone oxidoreductase subunit O.